Consider the following 481-residue polypeptide: Replication factor C large subunit (481 aa).

43 to 50 contributes to the ATP binding site; it reads GKPGIGKT. Basic and acidic residues-rich tracts occupy residues 408 to 433 and 441 to 457; these read KVER…KDAD and VPKE…ERPA. Residues 408 to 481 form a disordered region; the sequence is KVEREKEPEP…HNQSTLFDGF (74 aa). Positions 471–481 are enriched in polar residues; the sequence is AHNQSTLFDGF.

Belongs to the activator 1 small subunits family. RfcL subfamily. As to quaternary structure, heteromultimer composed of small subunits (RfcS) and large subunits (RfcL).

Functionally, part of the RFC clamp loader complex which loads the PCNA sliding clamp onto DNA. This is Replication factor C large subunit from Methanoregula boonei (strain DSM 21154 / JCM 14090 / 6A8).